The chain runs to 151 residues: SsrA-binding protein (151 aa).

It belongs to the SmpB family.

The protein localises to the cytoplasm. Required for rescue of stalled ribosomes mediated by trans-translation. Binds to transfer-messenger RNA (tmRNA), required for stable association of tmRNA with ribosomes. tmRNA and SmpB together mimic tRNA shape, replacing the anticodon stem-loop with SmpB. tmRNA is encoded by the ssrA gene; the 2 termini fold to resemble tRNA(Ala) and it encodes a 'tag peptide', a short internal open reading frame. During trans-translation Ala-aminoacylated tmRNA acts like a tRNA, entering the A-site of stalled ribosomes, displacing the stalled mRNA. The ribosome then switches to translate the ORF on the tmRNA; the nascent peptide is terminated with the 'tag peptide' encoded by the tmRNA and targeted for degradation. The ribosome is freed to recommence translation, which seems to be the essential function of trans-translation. This Campylobacter concisus (strain 13826) protein is SsrA-binding protein.